A 296-amino-acid chain; its full sequence is Tubulin polyglutamylase complex subunit 2 (296 aa).

Residues 257–296 (KILIPKKKGPVQPVSGQKGPGPLAPPTSKPSAGCGNPVRK) are disordered.

As to quaternary structure, part of the neuronal tubulin polyglutamylase complex which contains TPGS1, TPGS2, TTLL1, LRRC49 and NICN1. Interacts with CSTPP1 and LRRC49.

The protein resides in the cytoplasm. It is found in the cytoskeleton. The protein localises to the microtubule organizing center. Its subcellular location is the centrosome. It localises to the centriolar satellite. Functionally, subunit of the tubulin polyglutamylase complex (TPGC). The complex mediates cilia and flagella polyglutamylation which is essential for their biogenesis and motility. This chain is Tubulin polyglutamylase complex subunit 2 (Tpgs2), found in Rattus norvegicus (Rat).